Consider the following 625-residue polypeptide: Prothrombin (625 aa).

The first 24 residues, 1–24, serve as a signal peptide directing secretion; the sequence is MARVRGPRLPGCLALAALFSLVHS. A propeptide spanning residues 25–43 is cleaved from the precursor; sequence QHVFLAHQQASSLLQRARR. The 47-residue stretch at 44 to 90 folds into the Gla domain; that stretch reads ANKGFLEEVRKGNLERECLEEPCSREEAFEALESLSATDAFWAKYTA. Residues Glu-50, Glu-51, Glu-58, Glu-60, Glu-63, Glu-64, Glu-69, Glu-70, Glu-73, and Glu-76 each carry the 4-carboxyglutamate modification. Cys-61 and Cys-66 are joined by a disulfide. Cystine bridges form between Cys-91–Cys-104, Cys-109–Cys-187, Cys-130–Cys-170, Cys-158–Cys-182, Cys-214–Cys-292, Cys-235–Cys-275, Cys-263–Cys-287, Cys-339–Cys-485, Cys-394–Cys-410, Cys-539–Cys-553, and Cys-567–Cys-597. Kringle domains lie at 109-187 and 214-292; these read CAEG…VPVC and CVPD…LNYC. Residues Asn-120 and Asn-144 are each glycosylated (N-linked (GlcNAc...) asparagine). The 255-residue stretch at 367–621 folds into the Peptidase S1 domain; sequence IVEGQDAEVG…LKKWIQKVID (255 aa). His-409 functions as the Charge relay system in the catalytic mechanism. Asn-419 carries N-linked (GlcNAc...) asparagine glycosylation. The Charge relay system role is filled by Asp-465. Positions 554-576 are high affinity receptor-binding region which is also known as the TP508 peptide; it reads AGYKPGEGKRGDACEGDSGGPFV. Catalysis depends on Ser-571, which acts as the Charge relay system.

It belongs to the peptidase S1 family. As to quaternary structure, heterodimer (named alpha-thrombin) of a light and a heavy chain; disulfide-linked. Forms a heterodimer with SERPINA5. In plasma, interacts (via N-terminus) with alpha-1-microglobulin; this interaction does not prevent the activation of prothrombin to thrombin. In terms of processing, the gamma-carboxyglutamyl residues, which bind calcium ions, result from the carboxylation of glutamyl residues by a microsomal enzyme, the vitamin K-dependent carboxylase. The modified residues are necessary for the calcium-dependent interaction with a negatively charged phospholipid surface, which is essential for the conversion of prothrombin to thrombin. Post-translationally, in the penultimate step of the coagulation cascade, prothrombin is converted to thrombin by the prothrombinase complex composed of factor Xa (F10), cofactor Va (F5), and phospholipids. This activation requires factor Xa-catalyzed sequential cleavage at 2 sites, Arg-317 and Arg-366, along 2 possible pathways. In the first pathway, the first cleavage occurs at Arg-317, leading to the formation of the inactive intermediate prethrombin-2. This pathway preferentially occurs on platelets and in the absence of cofactor Va. In the second pathway, the first cleavage occurs at Arg-366, which separates protease domain into 2 chains that remain connected through a disulfide bond and generates the active intermediate meizothrombin. The presence of cofactor Va directs activation along the meizothrombin pathway and greatly accelerates the rate of cleavage at Arg-366, but has a smaller effect on the cleavage of meizothrombin at Arg-317. Meizothrombin accumulates as an intermediate when prothrombinase is assembled on the membrane of red blood cells. Expressed by the liver and secreted in plasma.

The protein resides in the secreted. The protein localises to the extracellular space. It catalyses the reaction Selective cleavage of Arg-|-Gly bonds in fibrinogen to form fibrin and release fibrinopeptides A and B.. With respect to regulation, activity is promoted in the presence of negatively charged surfaces, such as polyphosphate and dextran sulfate. Inhibited by SERPINA5. In terms of biological role, thrombin, which cleaves bonds after Arg and Lys, converts fibrinogen to fibrin and activates factors V, VII, VIII, XIII, and, in complex with thrombomodulin, protein C. Functions in blood homeostasis, inflammation and wound healing. Activates coagulation factor XI (F11); activation is promoted by the contact with negatively charged surfaces. Triggers the production of pro-inflammatory cytokines, such as MCP-1/CCL2 and IL8/CXCL8, in endothelial cells. This Bos taurus (Bovine) protein is Prothrombin (F2).